Here is a 226-residue protein sequence, read N- to C-terminus: NADH-ubiquinone oxidoreductase chain 6 (226 aa).

Transmembrane regions (helical) follow at residues 2–22 (STLGLLIMLLGIIIMCTLVIL), 28–48 (IYSILNLIVIYGCYASILLTV), 56–76 (IYILVNVGAIAVLFLFIVMMI), 90–110 (YNIYMIVGIIGVVGLLGILIT), and 169–189 (IWFIMACIILLIGMVGVIYIT).

Belongs to the complex I subunit 6 family.

It is found in the mitochondrion membrane. It carries out the reaction a ubiquinone + NADH + 5 H(+)(in) = a ubiquinol + NAD(+) + 4 H(+)(out). Its function is as follows. Core subunit of the mitochondrial membrane respiratory chain NADH dehydrogenase (Complex I) that is believed to belong to the minimal assembly required for catalysis. Complex I functions in the transfer of electrons from NADH to the respiratory chain. The immediate electron acceptor for the enzyme is believed to be ubiquinone. The polypeptide is NADH-ubiquinone oxidoreductase chain 6 (nad6) (Dictyostelium discoideum (Social amoeba)).